Reading from the N-terminus, the 780-residue chain is ATP-dependent 6-phosphofructokinase, liver type (780 aa).

N-acetylalanine is present on alanine 2. Positions 2-390 are N-terminal catalytic PFK domain 1; the sequence is ATVDLEKLRM…NWKIYKLLAH (389 aa). Residues glycine 25, 88 to 89, and 118 to 121 each bind ATP; these read RC and GDGS. Aspartate 119 contacts Mg(2+). Substrate contacts are provided by residues 164–166, arginine 201, 208–210, glutamate 264, arginine 292, and 298–301; these read SID, MGR, and HVQR. The Proton acceptor role is filled by aspartate 166. Residue serine 377 is modified to Phosphoserine. The interval 391-400 is interdomain linker; the sequence is QKVSKEKSNF. A C-terminal regulatory PFK domain 2 region spans residues 401–780; it reads SLAILNVGAP…RRTLSIDKGF (380 aa). Residues arginine 470, 527–531, arginine 565, 572–574, and glutamate 628 contribute to the beta-D-fructose 2,6-bisphosphate site; these read TISNN and MGG. The O-linked (GlcNAc) serine glycan is linked to serine 529. Tyrosine 640 bears the Phosphotyrosine mark. Beta-D-fructose 2,6-bisphosphate is bound by residues arginine 654, 660–663, and arginine 734; that span reads HLQQ. At serine 775 the chain carries Phosphoserine.

It belongs to the phosphofructokinase type A (PFKA) family. ATP-dependent PFK group I subfamily. Eukaryotic two domain clade 'E' sub-subfamily. Homo- and heterotetramers. Phosphofructokinase (PFK) enzyme functions as a tetramer composed of different combinations of 3 types of subunits, called PFKM (M), PFKL (L) and PFKP (P). The composition of the PFK tetramer differs according to the tissue type it is present in. The kinetic and regulatory properties of the tetrameric enzyme are dependent on the subunit composition, hence can vary across tissues. The cofactor is Mg(2+). In terms of processing, glcNAcylation at Ser-529 by OGT decreases enzyme activity, leading to redirect glucose flux through the oxidative pentose phosphate pathway. Glycosylation is stimulated by both hypoxia and glucose deprivation.

It localises to the cytoplasm. The enzyme catalyses beta-D-fructose 6-phosphate + ATP = beta-D-fructose 1,6-bisphosphate + ADP + H(+). Its pathway is carbohydrate degradation; glycolysis; D-glyceraldehyde 3-phosphate and glycerone phosphate from D-glucose: step 3/4. Its activity is regulated as follows. Allosterically activated by ADP, AMP, or fructose 2,6-bisphosphate, and allosterically inhibited by ATP or citrate. GlcNAcylation by OGT overcomes allosteric regulation. In terms of biological role, catalyzes the phosphorylation of D-fructose 6-phosphate to fructose 1,6-bisphosphate by ATP, the first committing step of glycolysis. Negatively regulates the phagocyte oxidative burst in response to bacterial infection by controlling cellular NADPH biosynthesis and NADPH oxidase-derived reactive oxygen species. Upon macrophage activation, drives the metabolic switch toward glycolysis, thus preventing glucose turnover that produces NADPH via pentose phosphate pathway. The protein is ATP-dependent 6-phosphofructokinase, liver type of Mus musculus (Mouse).